The primary structure comprises 464 residues: Uronate isomerase (464 aa).

Belongs to the metallo-dependent hydrolases superfamily. Uronate isomerase family.

The catalysed reaction is D-glucuronate = D-fructuronate. The enzyme catalyses aldehydo-D-galacturonate = keto-D-tagaturonate. It participates in carbohydrate metabolism; pentose and glucuronate interconversion. The sequence is that of Uronate isomerase from Caldicellulosiruptor saccharolyticus (strain ATCC 43494 / DSM 8903 / Tp8T 6331).